Here is a 296-residue protein sequence, read N- to C-terminus: Alpha/beta-gliadin clone PW1215 (296 aa).

Residues 1–20 (MKTFLILALLAIVATTATTA) form the signal peptide. Disordered stretches follow at residues 24–126 (PVPQ…QAQQ) and 220–255 (SSQV…VQPQ). Over residues 25–36 (VPQPQPQNPSQP) the composition is skewed to pro residues. Low complexity predominate over residues 37–58 (QPQGQVPLVQQQQFPGQQQQFP). Pro residues-rich tracts occupy residues 59–71 (PQQP…PFPS) and 81–116 (FPQP…PQPQ). 2 stretches are compositionally biased toward low complexity: residues 117 to 126 (QPISQQQAQQ) and 220 to 241 (SSQV…FFQP). Residues 242–255 (SQQNPQAQGSVQPQ) are compositionally biased toward polar residues.

Belongs to the gliadin/glutenin family. Substrate of transglutaminase.

Gliadin is the major seed storage protein in wheat. This chain is Alpha/beta-gliadin clone PW1215, found in Triticum aestivum (Wheat).